Reading from the N-terminus, the 209-residue chain is MKRQYKNTKKEFLGACFLGIVALFSLTIWHVINRTSKNKSYKVFVEFDSAYGIQEGTSVRLRGLPIGKVVGISQSSHSILTRIEIQSCNTIIPKTSLIETNQTGLLNDTIIDIVPFTTLNQEYHSLKEGPLSKTCDSNQIICHLNYLQGERGLNYDDLIRATTRISQRFDDPELFYGLYYLIGNMLKLSSNLVDCTEYMASISHFLGYK.

It localises to the plastid. The protein localises to the chloroplast. This is an uncharacterized protein from Porphyra purpurea (Red seaweed).